We begin with the raw amino-acid sequence, 265 residues long: Small ribosomal subunit protein uS3 (265 aa).

Positions 39-107 constitute a KH type-2 domain; that stretch reads VRDFLKKKLK…PVHVNIEEIR (69 aa). The interval 211–265 is disordered; sequence NDAPVVEEPQDDRRRRPGRPEGRRREGEGRPGGNRRGGAGAGRRAAPGADAKSGE. The span at 221–239 shows a compositional bias: basic and acidic residues; it reads DDRRRRPGRPEGRRREGEG. A compositionally biased stretch (gly residues) spans 240–251; the sequence is RPGGNRRGGAGA.

It belongs to the universal ribosomal protein uS3 family. In terms of assembly, part of the 30S ribosomal subunit. Forms a tight complex with proteins S10 and S14.

In terms of biological role, binds the lower part of the 30S subunit head. Binds mRNA in the 70S ribosome, positioning it for translation. This Cupriavidus necator (strain ATCC 17699 / DSM 428 / KCTC 22496 / NCIMB 10442 / H16 / Stanier 337) (Ralstonia eutropha) protein is Small ribosomal subunit protein uS3.